Consider the following 382-residue polypeptide: Glutamyl-tRNA reductase (382 aa).

Residues 38–41, S85, 90–92, and Q96 contribute to the substrate site; these read TCNR and ENQ. C39 functions as the Nucleophile in the catalytic mechanism. 164–169 contacts NADP(+); sequence GAGEIG.

It belongs to the glutamyl-tRNA reductase family. In terms of assembly, homodimer.

The catalysed reaction is (S)-4-amino-5-oxopentanoate + tRNA(Glu) + NADP(+) = L-glutamyl-tRNA(Glu) + NADPH + H(+). The protein operates within porphyrin-containing compound metabolism; protoporphyrin-IX biosynthesis; 5-aminolevulinate from L-glutamyl-tRNA(Glu): step 1/2. Catalyzes the NADPH-dependent reduction of glutamyl-tRNA(Glu) to glutamate 1-semialdehyde (GSA). The chain is Glutamyl-tRNA reductase from Methanococcus maripaludis (strain C7 / ATCC BAA-1331).